Consider the following 445-residue polypeptide: MSETTLNAAEQPIDELVSWVKQHDFSLNLTTERLAFLIAIAVLSNERFDEELGEGELHDAFTIVTRLFEETGEASAFRANNAINELVKQRLISRFTSEMTEGASIYRLSPLAIGITDYYVRHREFSKLRLSIQLSMVAGEMAKAIEAAKQGGTAGHWKKNVYAVLKYSVGEIFDQIDLNQRVMDEQQQSVKQQIADLLNKDWREAINNCESLLSETSNTLKELQDTLQAAGDELQTQILDIQELVYGDEELEFIEETLFGLQMKLDRITSWGQQAIDLWIGYDRHVHKFIRTAIDMDKNRIFSTRLRQSVKDYFDMPWYLTYADAERLSDLRDEALVLRDDEVTGQVPLEVEYEEFQQVNDELAERIGEMLRLHKDNGKPIDLGIVLKDYLAQHPSTHHFDLARIVIDQAVRMGYSESDYQAIQPDWQAINDYGAKVQANVIDRY.

The tract at residues 213-241 is leucine-zipper; that stretch reads LSETSNTLKELQDTLQAAGDELQTQILDI.

It belongs to the MukF family. In terms of assembly, interacts, and probably forms a ternary complex, with MukE and MukB via its C-terminal region. The complex formation is stimulated by calcium or magnesium. It is required for an interaction between MukE and MukB.

The protein resides in the cytoplasm. It is found in the nucleoid. Its function is as follows. Involved in chromosome condensation, segregation and cell cycle progression. May participate in facilitating chromosome segregation by condensation DNA from both sides of a centrally located replisome during cell division. Not required for mini-F plasmid partitioning. Probably acts via its interaction with MukB and MukE. Overexpression results in anucleate cells. It has a calcium binding activity. This chain is Chromosome partition protein MukF, found in Vibrio vulnificus (strain CMCP6).